The primary structure comprises 70 residues: Small ribosomal subunit protein bS21 (70 aa).

This sequence belongs to the bacterial ribosomal protein bS21 family.

The sequence is that of Small ribosomal subunit protein bS21 from Campylobacter jejuni subsp. jejuni serotype O:23/36 (strain 81-176).